Reading from the N-terminus, the 520-residue chain is Cobalt-zinc-cadmium resistance protein CzcB (520 aa).

A helical membrane pass occupies residues 9-29 (AAIAAIVLVGGVATGGVLLSG). The interval 28 to 85 (SGRSAPEEQGGHSESKGHGDTEHHGKQAAEADHKDDKSHGDGEHHEVKKGPNGGALFS) is disordered. The span at 32–76 (APEEQGGHSESKGHGDTEHHGKQAAEADHKDDKSHGDGEHHEVKK) shows a compositional bias: basic and acidic residues. Positions 286-320 (EQKISAEQDYLSARNALQEAQISVQNAQQKLTAIG) form a coiled coil.

This sequence belongs to the membrane fusion protein (MFP) (TC 8.A.1) family.

Its subcellular location is the cell inner membrane. Functionally, czcA and CzcB together would act in zinc efflux nearly as effectively as the complete czc efflux system (CzcABC). The CzcB protein is thought to funnel zinc cations to the CzcA transport protein. This Cupriavidus metallidurans (strain ATCC 43123 / DSM 2839 / NBRC 102507 / CH34) (Ralstonia metallidurans) protein is Cobalt-zinc-cadmium resistance protein CzcB (czcB).